The primary structure comprises 580 residues: mRNA cap guanine-N(7) methyltransferase (580 aa).

2 stretches are compositionally biased toward polar residues: residues 1-17 (MSGS…TSLI) and 25-53 (EATS…NSDL). The interval 1-222 (MSGSKQGSEK…PVEAQPYSRL (222 aa)) is disordered. Over residues 54-67 (KVTENKPKNTEMKP) the composition is skewed to basic and acidic residues. Positions 69 to 90 (DPNTNASTTENTPITTSNAQVS) are enriched in polar residues. Positions 102–154 (REPEEAQNRYDRYVPRVDNRRRGEPRVAEVRQDPRYAKYLRQDQEERRIRRPD) are enriched in basic and acidic residues. The segment covering 191 to 214 (ESEENGDEQQGDDEEETPGNEEPV) has biased composition (acidic residues). An mRNA cap 0 methyltransferase domain is found at 271–579 (SPIYKLRNFN…FYLGFAFEKL (309 aa)). 280–281 (NN) provides a ligand contact to mRNA. Residues lysine 284, cysteine 308, aspartate 330, aspartate 376, glutamine 406, and tyrosine 411 each contribute to the S-adenosyl-L-methionine site.

The protein belongs to the class I-like SAM-binding methyltransferase superfamily. mRNA cap 0 methyltransferase family.

The protein resides in the nucleus. It carries out the reaction a 5'-end (5'-triphosphoguanosine)-ribonucleoside in mRNA + S-adenosyl-L-methionine = a 5'-end (N(7)-methyl 5'-triphosphoguanosine)-ribonucleoside in mRNA + S-adenosyl-L-homocysteine. Its function is as follows. Responsible for methylating the 5'-cap structure of mRNAs. This is mRNA cap guanine-N(7) methyltransferase (ABD1) from Meyerozyma guilliermondii (strain ATCC 6260 / CBS 566 / DSM 6381 / JCM 1539 / NBRC 10279 / NRRL Y-324) (Yeast).